Consider the following 376-residue polypeptide: Cysteine synthase 1 (376 aa).

A mitochondrion-targeting transit peptide spans 1-16; that stretch reads MFRHGVRTFATTSLRR. Lys79 bears the N6-(pyridoxal phosphate)lysine mark. Residues Asn109, 215 to 219, and Ser314 each bind pyridoxal 5'-phosphate; that span reads GTGGT.

The protein belongs to the cysteine synthase/cystathionine beta-synthase family. Requires pyridoxal 5'-phosphate as cofactor.

Its subcellular location is the mitochondrion. It catalyses the reaction O-succinyl-L-serine + hydrogen sulfide = L-cysteine + succinate. It carries out the reaction O-acetyl-L-serine + hydrogen sulfide = L-cysteine + acetate. It functions in the pathway amino-acid biosynthesis; L-cysteine biosynthesis; L-cysteine from L-serine: step 2/2. In terms of biological role, catalyzes the conversion of O-succinyl-L-serine into cysteine, the last step in the cysteine biosynthesis pathway. Can also use O-acetyl-L-serine. The polypeptide is Cysteine synthase 1 (cys-17) (Neurospora crassa (strain ATCC 24698 / 74-OR23-1A / CBS 708.71 / DSM 1257 / FGSC 987)).